The following is an 89-amino-acid chain: Small ribosomal subunit protein uS15 (89 aa).

Belongs to the universal ribosomal protein uS15 family. Part of the 30S ribosomal subunit. Forms a bridge to the 50S subunit in the 70S ribosome, contacting the 23S rRNA.

In terms of biological role, one of the primary rRNA binding proteins, it binds directly to 16S rRNA where it helps nucleate assembly of the platform of the 30S subunit by binding and bridging several RNA helices of the 16S rRNA. Forms an intersubunit bridge (bridge B4) with the 23S rRNA of the 50S subunit in the ribosome. The chain is Small ribosomal subunit protein uS15 from Salinispora tropica (strain ATCC BAA-916 / DSM 44818 / JCM 13857 / NBRC 105044 / CNB-440).